A 311-amino-acid chain; its full sequence is Catechol 1,2-dioxygenase (311 aa).

Residue Tyr-164 coordinates catechol. Fe cation is bound by residues Tyr-164, Tyr-200, His-224, and His-226. Residue 224–226 (HIH) coordinates catechol.

The protein belongs to the intradiol ring-cleavage dioxygenase family. Homodimer. Fe(3+) serves as cofactor.

It carries out the reaction catechol + O2 = cis,cis-muconate + 2 H(+). It functions in the pathway aromatic compound metabolism; beta-ketoadipate pathway; 5-oxo-4,5-dihydro-2-furylacetate from catechol: step 1/3. This Acinetobacter baylyi (strain ATCC 33305 / BD413 / ADP1) protein is Catechol 1,2-dioxygenase.